The sequence spans 98 residues: Integration host factor subunit alpha (98 aa).

Belongs to the bacterial histone-like protein family. In terms of assembly, heterodimer of an alpha and a beta chain.

Its function is as follows. This protein is one of the two subunits of integration host factor, a specific DNA-binding protein that functions in genetic recombination as well as in transcriptional and translational control. This is Integration host factor subunit alpha from Mannheimia succiniciproducens (strain KCTC 0769BP / MBEL55E).